The chain runs to 61 residues: Small ribosomal subunit protein uS14 (61 aa).

Zn(2+) is bound by residues cysteine 24, cysteine 27, cysteine 40, and cysteine 43.

The protein belongs to the universal ribosomal protein uS14 family. Zinc-binding uS14 subfamily. In terms of assembly, part of the 30S ribosomal subunit. Contacts proteins S3 and S10. Zn(2+) is required as a cofactor.

Binds 16S rRNA, required for the assembly of 30S particles and may also be responsible for determining the conformation of the 16S rRNA at the A site. This chain is Small ribosomal subunit protein uS14, found in Nitratiruptor sp. (strain SB155-2).